Consider the following 94-residue polypeptide: Pyrimidine/purine nucleoside phosphorylase (94 aa).

Belongs to the nucleoside phosphorylase PpnP family.

The catalysed reaction is a purine D-ribonucleoside + phosphate = a purine nucleobase + alpha-D-ribose 1-phosphate. The enzyme catalyses adenosine + phosphate = alpha-D-ribose 1-phosphate + adenine. It catalyses the reaction cytidine + phosphate = cytosine + alpha-D-ribose 1-phosphate. It carries out the reaction guanosine + phosphate = alpha-D-ribose 1-phosphate + guanine. The catalysed reaction is inosine + phosphate = alpha-D-ribose 1-phosphate + hypoxanthine. The enzyme catalyses thymidine + phosphate = 2-deoxy-alpha-D-ribose 1-phosphate + thymine. It catalyses the reaction uridine + phosphate = alpha-D-ribose 1-phosphate + uracil. It carries out the reaction xanthosine + phosphate = alpha-D-ribose 1-phosphate + xanthine. Functionally, catalyzes the phosphorolysis of diverse nucleosides, yielding D-ribose 1-phosphate and the respective free bases. Can use uridine, adenosine, guanosine, cytidine, thymidine, inosine and xanthosine as substrates. Also catalyzes the reverse reactions. The sequence is that of Pyrimidine/purine nucleoside phosphorylase from Citrobacter koseri (strain ATCC BAA-895 / CDC 4225-83 / SGSC4696).